A 575-amino-acid polypeptide reads, in one-letter code: Potassium-transporting ATPase potassium-binding subunit (575 aa).

A run of 12 helical transmembrane segments spans residues 4–24, 61–81, 133–153, 180–200, 258–278, 289–309, 344–364, 372–392, 394–414, 431–451, 499–519, and 545–565; these read SAWG…WPVG, LRYA…VYAL, GLAV…FALI, LWVL…QGVI, LANL…CFAF, WAVL…VIPA, IDAS…AVIA, LGGM…GGVG, GLYG…LMIG, LISI…AVAV, LLGL…LAIA, and LLIG…LALG.

Belongs to the KdpA family. In terms of assembly, the system is composed of three essential subunits: KdpA, KdpB and KdpC.

Its subcellular location is the cell inner membrane. In terms of biological role, part of the high-affinity ATP-driven potassium transport (or Kdp) system, which catalyzes the hydrolysis of ATP coupled with the electrogenic transport of potassium into the cytoplasm. This subunit binds the periplasmic potassium ions and delivers the ions to the membrane domain of KdpB through an intramembrane tunnel. This chain is Potassium-transporting ATPase potassium-binding subunit, found in Variovorax paradoxus (strain S110).